A 311-amino-acid chain; its full sequence is Aquaporin NIP3-1 (311 aa).

The tract at residues 1–34 (MEMAAPNGGGAAGMSSPVNGASAPATPGTPAPLF) is disordered. Residues 20–34 (GASAPATPGTPAPLF) show a composition bias toward low complexity. The next 2 helical transmembrane spans lie at 85–105 (LGAE…APIV) and 111–131 (GAIS…TIIL). Positions 142–144 (NPS) match the NPA 1 motif. The next 3 membrane-spanning stretches (helical) occupy residues 158-178 (LQVP…GFAL), 202-222 (AFFT…AVAT), and 226-246 (AVGE…ILIA). Residues 255 to 257 (NPV) carry the NPA 2 motif. Residues 273–293 (WIYLIAPTLGAVAGAGVYTAV) form a helical membrane-spanning segment.

Belongs to the MIP/aquaporin (TC 1.A.8) family. NIP (TC 1.A.8.12) subfamily. As to expression, expressed in roots and leaves.

It is found in the membrane. In terms of biological role, aquaporins facilitate the transport of water and small neutral solutes across cell membranes. This Oryza sativa subsp. japonica (Rice) protein is Aquaporin NIP3-1 (NIP3-1).